The primary structure comprises 613 residues: Glutamyl-tRNA(Gln) amidotransferase subunit E (613 aa).

Belongs to the GatB/GatE family. GatE subfamily. Heterodimer of GatD and GatE.

It catalyses the reaction L-glutamyl-tRNA(Gln) + L-glutamine + ATP + H2O = L-glutaminyl-tRNA(Gln) + L-glutamate + ADP + phosphate + H(+). Functionally, allows the formation of correctly charged Gln-tRNA(Gln) through the transamidation of misacylated Glu-tRNA(Gln) in organisms which lack glutaminyl-tRNA synthetase. The reaction takes place in the presence of glutamine and ATP through an activated gamma-phospho-Glu-tRNA(Gln). The GatDE system is specific for glutamate and does not act on aspartate. In Archaeoglobus fulgidus (strain ATCC 49558 / DSM 4304 / JCM 9628 / NBRC 100126 / VC-16), this protein is Glutamyl-tRNA(Gln) amidotransferase subunit E.